The following is a 310-amino-acid chain: Protoheme IX farnesyltransferase (310 aa).

A run of 9 helical transmembrane segments spans residues 31 to 51 (VMSL…DSIH), 52 to 72 (PLIA…AGAM), 102 to 119 (ALSF…FMAL), 123 to 145 (ILAS…IWLK), 151 to 171 (NIVI…AAVS), 179 to 199 (IILF…IALF), 225 to 245 (ILIY…IGMN), 248 to 268 (IYLI…FSLF), and 281 to 301 (FTYS…TSTI).

Belongs to the UbiA prenyltransferase family. Protoheme IX farnesyltransferase subfamily.

The protein localises to the cell inner membrane. It carries out the reaction heme b + (2E,6E)-farnesyl diphosphate + H2O = Fe(II)-heme o + diphosphate. It participates in porphyrin-containing compound metabolism; heme O biosynthesis; heme O from protoheme: step 1/1. Its function is as follows. Converts heme B (protoheme IX) to heme O by substitution of the vinyl group on carbon 2 of heme B porphyrin ring with a hydroxyethyl farnesyl side group. The polypeptide is Protoheme IX farnesyltransferase (Rickettsia prowazekii (strain Madrid E)).